The chain runs to 243 residues: Probable fructoselysine utilization operon transcriptional repressor (243 aa).

Residues 10–78 (QLLYATVRQR…QGKGTFVQSQ (69 aa)) form the HTH gntR-type domain. Residues 38–57 (ENELCTQYNVSRITIRKAIS) constitute a DNA-binding region (H-T-H motif).

The protein operates within carbohydrate metabolism; fructoselysine degradation [regulation]. Functionally, may regulate the transcription of the frlABCDR operon, involved in the utilization of fructoselysine and psicoselysine. The chain is Probable fructoselysine utilization operon transcriptional repressor (frlR) from Escherichia coli O157:H7.